A 73-amino-acid polypeptide reads, in one-letter code: Toxin Td10 (73 aa).

Positions 1–7 (IGMVVEC) are cleaved as a signal peptide. The LCN-type CS-alpha/beta domain occupies 8-70 (KDGYLMGPDG…VWERATNRCG (63 aa)). 4 disulfide bridges follow: cysteine 18–cysteine 69, cysteine 22–cysteine 44, cysteine 30–cysteine 50, and cysteine 34–cysteine 52. Lysine 71 is modified (lysine amide).

It belongs to the long (4 C-C) scorpion toxin superfamily. Sodium channel inhibitor family. Beta subfamily. In terms of tissue distribution, expressed by the venom gland.

The protein resides in the secreted. In terms of biological role, beta toxins bind voltage-independently at site-4 of sodium channels (Nav) and shift the voltage of activation toward more negative potentials thereby affecting sodium channel activation and promoting spontaneous and repetitive firing. The sequence is that of Toxin Td10 from Tityus discrepans (Venezuelan scorpion).